Here is a 187-residue protein sequence, read N- to C-terminus: Large ribosomal subunit protein uL6 (187 aa).

The tract at residues 151–170 (EAARIRSLRPPEPYKGKGIK) is disordered.

The protein belongs to the universal ribosomal protein uL6 family. In terms of assembly, part of the 50S ribosomal subunit.

Functionally, this protein binds to the 23S rRNA, and is important in its secondary structure. It is located near the subunit interface in the base of the L7/L12 stalk, and near the tRNA binding site of the peptidyltransferase center. This chain is Large ribosomal subunit protein uL6, found in Chloroflexus aurantiacus (strain ATCC 29366 / DSM 635 / J-10-fl).